Reading from the N-terminus, the 566-residue chain is Mucolipin-2 (566 aa).

Residues 1-65 (MPGDEETLDL…YRARRQIPWK (65 aa)) lie on the Cytoplasmic side of the membrane. The helical transmembrane segment at 66 to 86 (LGLQILKIVMVTTQLVRFGLS) threads the bilayer. The Extracellular segment spans residues 87–288 (NQLVVAFKED…ISGSTQRSTH (202 aa)). The tract at residues 107-123 (KGFSGVDEDDYSCSIYT) is extracellular/lumenal pore loop. 2 cysteine pairs are disulfide-bonded: Cys-164–Cys-190 and Cys-243–Cys-274. Residues 289 to 309 (YLLVFDVFVIMICLASLILCT) traverse the membrane as a helical segment. The Cytoplasmic segment spans residues 310–346 (RSIVLALRLRKRFLNFFLEKYKQRVCGADQWEFVNGW). Residues 347 to 367 (YVLVTISDLMTIIGSILKMEI) form a helical membrane-spanning segment. The Extracellular portion of the chain corresponds to 368 to 376 (KAKKLTNYD). Residues 377–397 (VCSILLGTSTLFVWVGVIRYL) form a helical membrane-spanning segment. Over 398-419 (GYFQTYNVLILTMQASLPKVLR) the chain is Cytoplasmic. A helical transmembrane segment spans residues 420–440 (FCACAGMIYLGYTFCGWIVLG). At 441-448 (PYHEKFEN) the chain is on the extracellular side. The segment at residues 449-469 (LNIVAECLFSLVNGDDMFATF) is an intramembrane region (pore-forming). Residues 461-464 (NGDD) carry the Selectivity filter motif. The Extracellular segment spans residues 470–480 (AQIQQKSILVW). Residues 481-502 (LFSRLYLYSFISLFIYMVLSLF) form a helical membrane-spanning segment. Topologically, residues 503–566 (IALITDSYHT…RSNDHLILID (64 aa)) are cytoplasmic.

This sequence belongs to the transient receptor (TC 1.A.4) family. Polycystin subfamily. MCOLN2 sub-subfamily. In terms of assembly, forms homooligomeric complexes; probably tetrameric. Can heterooligomerize with MCOLN1; heteromeric assemblies have different channel properties as compared to the respective homooligomers and may be tissue-specific. Interacts with TMEM176A. In terms of tissue distribution, expressed in activated macrophages and microglia (at protein level). As to expression, isoform 1 is widely expressed at very low levels. Isoform 2 is expressed at high levels in lymphoid tissues (thymus and spleen) and kidney, and at moderate levels in heart, lung, liver and stomach.

The protein resides in the cell membrane. Its subcellular location is the lysosome membrane. The protein localises to the recycling endosome membrane. The enzyme catalyses Ca(2+)(in) = Ca(2+)(out). It catalyses the reaction Fe(2+)(in) = Fe(2+)(out). Its activity is regulated as follows. Fe(2+) channel activity is potentiated by low pH. Nonselective cation channel probably playing a role in the regulation of membrane trafficking events. Acts as a Ca(2+)-permeable cation channel with inwardly rectifying activity. May activate ARF6 and be involved in the trafficking of GPI-anchored cargo proteins to the cell surface via the ARF6-regulated recycling pathway. May play a role in immune processes. In adaptive immunity, TRPML2 and TRPML1 may play redundant roles in the function of the specialized lysosomes of B cells. In the innate immune response, may play a role in the regulation of chemokine secretion and macrophage migration. Through a possible and probably tissue-specific heteromerization with MCOLN1 may be at least in part involved in many lysosome-dependent cellular events. Also functions as a Fe(2+) permeable channel. In Mus musculus (Mouse), this protein is Mucolipin-2 (Mcoln2).